The following is a 185-amino-acid chain: Ribosome-recycling factor (185 aa).

Belongs to the RRF family.

Its subcellular location is the cytoplasm. In terms of biological role, responsible for the release of ribosomes from messenger RNA at the termination of protein biosynthesis. May increase the efficiency of translation by recycling ribosomes from one round of translation to another. The polypeptide is Ribosome-recycling factor (Clavibacter sepedonicus (Clavibacter michiganensis subsp. sepedonicus)).